We begin with the raw amino-acid sequence, 1012 residues long: Vacuolar protein-sorting protein bro-1 (1012 aa).

The BRO1 domain occupies Pro-5–Met-407. Positions Ile-301–Gln-330 form a coiled coil. The segment at Arg-558 to Ala-578 is disordered. A coiled-coil region spans residues Leu-719–Glu-775. 2 disordered regions span residues Met-784 to Pro-812 and Asn-827 to Lys-1012. A compositionally biased stretch (polar residues) spans Asn-827–Pro-842. Residues Asn-844 to Asn-857 are compositionally biased toward low complexity. A compositionally biased stretch (polar residues) spans Gln-892–Asn-913. The segment covering Pro-914–Pro-930 has biased composition (low complexity). Over residues Gly-931–Gly-945 the composition is skewed to pro residues. A compositionally biased stretch (gly residues) spans Pro-970–Gly-985.

It belongs to the BRO1 family.

Its subcellular location is the cytoplasm. The protein localises to the endosome. Functionally, involved in concentration and sorting of cargo proteins of the multivesicular body (MVB) for incorporation into intralumenal vesicles. The polypeptide is Vacuolar protein-sorting protein bro-1 (bro-1) (Neurospora crassa (strain ATCC 24698 / 74-OR23-1A / CBS 708.71 / DSM 1257 / FGSC 987)).